A 276-amino-acid chain; its full sequence is MLEQEENGLFEIPDYEHVEDETFPPFPPPGSPERDPAEAEPDEGSGAPVPVPPKRIVKRNIPKLDATRLTSERGLPALRHVFDKTKFKGKGHEAEDLKTLIRHMEHWAHRLFPKLQFEDFIDRVENLGNKKEVQTCLKRIRLDLPIVHEDFVNNNDEVEETNSLDAAATGFDAFVTSSSDSKRFASEASRNLTEEQQQRIEKNKQLALERRQAKLLSNSQSLENDVTVEESSTGENQEESNGLISADGPHDVPSASTQEEGQLEAEETQLDHPNLD.

A disordered region spans residues 1 to 54 (MLEQEENGLFEIPDYEHVEDETFPPFPPPGSPERDPAEAEPDEGSGAPVPVPPK). The interval 64–140 (LDATRLTSER…KEVQTCLKRI (77 aa)) is interaction with TIMELESS. Residues 217–243 (SNSQSLENDVTVEESSTGENQEESNGL) are compositionally biased toward polar residues. Positions 217 to 276 (SNSQSLENDVTVEESSTGENQEESNGLISADGPHDVPSASTQEEGQLEAEETQLDHPNLD) are disordered. A Phosphoserine modification is found at S219. T233 carries the post-translational modification Phosphothreonine.

This sequence belongs to the CSM3 family. Interacts with TIMELESS, which impairs TIMELESS self-association (via N-terminus). Associates with the MCM2-7 complex. Interacts with RPA2, PRDX2.

It localises to the cytoplasm. The protein resides in the nucleus. In terms of biological role, plays an important role in the control of DNA replication and the maintenance of replication fork stability. Important for cell survival after DNA damage or replication stress. May be specifically required for the ATR-CHEK1 pathway in the replication checkpoint induced by hydroxyurea or ultraviolet light. Forms a complex with TIMELESS and this complex regulates DNA replication processes under both normal and stress conditions, stabilizes replication forks and influences both CHEK1 phosphorylation and the intra-S phase checkpoint in response to genotoxic stress. This chain is TIMELESS-interacting protein (Tipin), found in Rattus norvegicus (Rat).